Reading from the N-terminus, the 470-residue chain is Glutamate--tRNA ligase (470 aa).

Residues 9–19 carry the 'HIGH' region motif; sequence PSPTGFLHVGG. Positions 236 to 240 match the 'KMSKS' region motif; that stretch reads RLSKR. Lys239 is an ATP binding site.

Belongs to the class-I aminoacyl-tRNA synthetase family. Glutamate--tRNA ligase type 1 subfamily. As to quaternary structure, monomer.

The protein localises to the cytoplasm. The enzyme catalyses tRNA(Glu) + L-glutamate + ATP = L-glutamyl-tRNA(Glu) + AMP + diphosphate. Catalyzes the attachment of glutamate to tRNA(Glu) in a two-step reaction: glutamate is first activated by ATP to form Glu-AMP and then transferred to the acceptor end of tRNA(Glu). The polypeptide is Glutamate--tRNA ligase (Legionella pneumophila (strain Paris)).